Consider the following 262-residue polypeptide: Type III pantothenate kinase (262 aa).

6 to 13 is a binding site for ATP; it reads DVGNTNAV. Substrate-binding positions include Y100 and 107-110; that span reads GADR. The Proton acceptor role is filled by D109. D129 is a K(+) binding site. An ATP-binding site is contributed by T132. T184 provides a ligand contact to substrate.

The protein belongs to the type III pantothenate kinase family. Homodimer. Requires NH4(+) as cofactor. K(+) is required as a cofactor.

The protein localises to the cytoplasm. The catalysed reaction is (R)-pantothenate + ATP = (R)-4'-phosphopantothenate + ADP + H(+). It functions in the pathway cofactor biosynthesis; coenzyme A biosynthesis; CoA from (R)-pantothenate: step 1/5. In terms of biological role, catalyzes the phosphorylation of pantothenate (Pan), the first step in CoA biosynthesis. This is Type III pantothenate kinase from Bacillus anthracis (strain A0248).